Consider the following 435-residue polypeptide: Nucleoredoxin (435 aa).

S2 carries the post-translational modification N-acetylserine. Residues 167-321 (PKPFREVIAG…VLELSDSNAV (155 aa)) form the Thioredoxin domain.

Belongs to the nucleoredoxin family. As to quaternary structure, associates with the phosphatase 2A holoenzyme. Interacts with PPP2CA; the interaction is direct. Interacts with DVL1 (via PDZ domain); the interaction is direct and regulated by oxidative stress.

The protein localises to the cytoplasm. It is found in the cytosol. Its subcellular location is the nucleus. It catalyses the reaction [protein]-dithiol + NAD(+) = [protein]-disulfide + NADH + H(+). It carries out the reaction [protein]-dithiol + NADP(+) = [protein]-disulfide + NADPH + H(+). Functionally, functions as a redox-dependent negative regulator of the Wnt signaling pathway, possibly by preventing ubiquitination of DVL3 by the BCR(KLHL12) complex. May also function as a transcriptional regulator act as a regulator of protein phosphatase 2A (PP2A). The sequence is that of Nucleoredoxin (NXN) from Bos taurus (Bovine).